We begin with the raw amino-acid sequence, 285 residues long: MSQLKPQEVVRLGDIQMANHLPFVLFGGMNVLESKDLAFEIAETYIDICKRLDIPYVFKASFDKANRSSLHSFRGPGLEKGIEWLGDIKKHFNVPIITDVHEPYQAAPVAEVADIIQLPAFLSRQTDLVEAMAKTQAIINIKKAQFLAPHEMRHILHKCLEAGNDKLILCERGSAFGYNNLVVDMLGFDIMKEMNVPVFFDVTHALQTPGGRSDSAGGRRAQITTLARAGMATGLAGLFLESHPDPDKAKCDGPSALRLSQLEPFLAQLKELDTLVKGFKKLDTH.

The protein belongs to the KdsA family.

Its subcellular location is the cytoplasm. It catalyses the reaction D-arabinose 5-phosphate + phosphoenolpyruvate + H2O = 3-deoxy-alpha-D-manno-2-octulosonate-8-phosphate + phosphate. Its pathway is carbohydrate biosynthesis; 3-deoxy-D-manno-octulosonate biosynthesis; 3-deoxy-D-manno-octulosonate from D-ribulose 5-phosphate: step 2/3. The protein operates within bacterial outer membrane biogenesis; lipopolysaccharide biosynthesis. The chain is 2-dehydro-3-deoxyphosphooctonate aldolase from Acinetobacter baumannii (strain AB307-0294).